Here is a 390-residue protein sequence, read N- to C-terminus: Cytochrome b (390 aa).

4 helical membrane-spanning segments follow: residues 32-52, 76-98, 113-133, and 179-199; these read MGSLLGLCLVIQILTGIFMAM, WFLRYAHANGASFFFICMYIHMG, LWTIGVIIFILTMATAFLGYC, and FFALHYLFPFVIAAVVIMHMM. Residues histidine 82 and histidine 96 each coordinate heme b. Residues histidine 183 and histidine 197 each coordinate heme b. Histidine 202 serves as a coordination point for a ubiquinone. 4 helical membrane-spanning segments follow: residues 225 to 245, 289 to 309, 321 to 341, and 348 to 368; these read FVFKDLITVFVFLIVFSLFVF, LMGVITMFSAILVLLVLPFTD, LSKLFFFLFVFNFVLLGQIGA, and YILMGQISTFLYFAYFLVFIP.

Belongs to the cytochrome b family. In terms of assembly, fungal cytochrome b-c1 complex contains 10 subunits; 3 respiratory subunits, 2 core proteins and 5 low-molecular weight proteins. Cytochrome b-c1 complex is a homodimer. Heme b serves as cofactor.

Its subcellular location is the mitochondrion inner membrane. Its function is as follows. Component of the ubiquinol-cytochrome c reductase complex (complex III or cytochrome b-c1 complex) that is part of the mitochondrial respiratory chain. The b-c1 complex mediates electron transfer from ubiquinol to cytochrome c. Contributes to the generation of a proton gradient across the mitochondrial membrane that is then used for ATP synthesis. This is Cytochrome b (COB) from Naumovozyma castellii (Yeast).